The primary structure comprises 213 residues: Probable aspartate aminotransferase (213 aa).

L-aspartate contacts are provided by G47, W133, and N183.

Belongs to the class-I pyridoxal-phosphate-dependent aminotransferase family. As to quaternary structure, homodimer. Pyridoxal 5'-phosphate is required as a cofactor.

The protein resides in the cytoplasm. The catalysed reaction is L-aspartate + 2-oxoglutarate = oxaloacetate + L-glutamate. This Streptomyces griseus protein is Probable aspartate aminotransferase (aspC).